A 718-amino-acid polypeptide reads, in one-letter code: Catalase-peroxidase (718 aa).

A cross-link (tryptophyl-tyrosyl-methioninium (Trp-Tyr) (with M-245)) is located at residues 98 to 219 (WHAAGTYRMG…LAATEMGLIY (122 aa)). Catalysis depends on histidine 99, which acts as the Proton acceptor. A cross-link (tryptophyl-tyrosyl-methioninium (Tyr-Met) (with W-98)) is located at residues 219-245 (YVNPEGPQASGDPRSAAPFIRATFGNM). Histidine 260 contacts heme b.

The protein belongs to the peroxidase family. Peroxidase/catalase subfamily. Homodimer or homotetramer. Heme b serves as cofactor. Post-translationally, formation of the three residue Trp-Tyr-Met cross-link is important for the catalase, but not the peroxidase activity of the enzyme.

It catalyses the reaction H2O2 + AH2 = A + 2 H2O. The enzyme catalyses 2 H2O2 = O2 + 2 H2O. Its function is as follows. Bifunctional enzyme with both catalase and broad-spectrum peroxidase activity. This Acinetobacter baumannii (strain AB307-0294) protein is Catalase-peroxidase.